The sequence spans 259 residues: Thiazole synthase (259 aa).

K95 (schiff-base intermediate with DXP) is an active-site residue. Residues G156, 183–184 (AG), and 205–206 (NS) contribute to the 1-deoxy-D-xylulose 5-phosphate site.

Belongs to the ThiG family. As to quaternary structure, homotetramer. Forms heterodimers with either ThiH or ThiS.

It is found in the cytoplasm. It carries out the reaction [ThiS sulfur-carrier protein]-C-terminal-Gly-aminoethanethioate + 2-iminoacetate + 1-deoxy-D-xylulose 5-phosphate = [ThiS sulfur-carrier protein]-C-terminal Gly-Gly + 2-[(2R,5Z)-2-carboxy-4-methylthiazol-5(2H)-ylidene]ethyl phosphate + 2 H2O + H(+). It functions in the pathway cofactor biosynthesis; thiamine diphosphate biosynthesis. Functionally, catalyzes the rearrangement of 1-deoxy-D-xylulose 5-phosphate (DXP) to produce the thiazole phosphate moiety of thiamine. Sulfur is provided by the thiocarboxylate moiety of the carrier protein ThiS. In vitro, sulfur can be provided by H(2)S. This chain is Thiazole synthase, found in Coxiella burnetii (strain CbuK_Q154) (Coxiella burnetii (strain Q154)).